A 79-amino-acid chain; its full sequence is U16-theraphotoxin-Cg1a (79 aa).

An N-terminal signal peptide occupies residues Met1–Ala19. The propeptide occupies Ser20–Arg44. 3 cysteine pairs are disulfide-bonded: Cys47–Cys62, Cys54–Cys67, and Cys61–Cys74.

It belongs to the neurotoxin 10 (Hwtx-1) family. 34 (Jztx-26) subfamily. As to expression, expressed by the venom gland.

The protein localises to the secreted. Functionally, probable ion channel inhibitor. The sequence is that of U16-theraphotoxin-Cg1a from Chilobrachys guangxiensis (Chinese earth tiger tarantula).